A 65-amino-acid polypeptide reads, in one-letter code: Large ribosomal subunit protein bL35 (65 aa).

This sequence belongs to the bacterial ribosomal protein bL35 family.

This Clostridium kluyveri (strain NBRC 12016) protein is Large ribosomal subunit protein bL35.